We begin with the raw amino-acid sequence, 710 residues long: Early transcription factor 82 kDa subunit (710 aa).

It belongs to the poxviridae VETF large subunit family. In terms of assembly, heterodimer of a 70 kDa and a 82 kDa subunit. Part of the early transcription complex composed of ETF, RAP94/OPG109, and the DNA-directed RNA polymerase.

The protein localises to the virion. Functionally, acts with RNA polymerase to initiate transcription from early gene promoters. Is recruited by the RPO-associated protein of 94 kDa RAP94/OPG109 to form the early transcription complex, which also contains the core RNA polymerase. ETF heterodimer binds to early gene promoters. The protein is Early transcription factor 82 kDa subunit (OPG133) of Homo sapiens (Human).